The primary structure comprises 564 residues: MFS-type efflux transporter ffsH (564 aa).

Positions 1–18 are enriched in basic and acidic residues; sequence MSEAEKKASQDAQHKEPM. The segment at 1-37 is disordered; it reads MSEAEKKASQDAQHKEPMADSETQLDSDSAPSSQAEK. Polar residues predominate over residues 21 to 35; that stretch reads SETQLDSDSAPSSQA. A run of 4 helical transmembrane segments spans residues 43–63, 98–118, 131–151, and 157–177; these read YPLS…ISAM, YVMI…GGAN, GIGA…LVPM, and FIGL…IIGG. N182 is a glycosylation site (N-linked (GlcNAc...) asparagine). A run of 9 helical transmembrane segments spans residues 187-207, 226-246, 254-274, 300-320, 334-354, 362-382, 389-409, 427-447, and 502-522; these read WVFY…VLFL, VVGN…LTYG, AANI…FIAW, FFIS…YPVY, VHLL…GGLV, PIHM…SVLT, AWAV…STTL, TWAY…AAIF, and VWLV…FEKE. The segment at 540 to 564 is disordered; it reads GDAKGDVERGEGQNDSREGGQNENV. N553 is a glycosylation site (N-linked (GlcNAc...) asparagine).

The protein belongs to the major facilitator superfamily.

The protein resides in the cell membrane. Functionally, MFS-type efflux transporter; part of the gene cluster that mediates the biosynthesis of the cytotoxic leucine-containing cytochalasans, including aspochalasin C, aspochalasin E, TMC-169, flavichalasine F, aspergillin PZ, aspochalasin M and flavichalasine G. FfsH might be involved in the excretion of cytochalasans. In Aspergillus flavipes, this protein is MFS-type efflux transporter ffsH.